Here is a 398-residue protein sequence, read N- to C-terminus: Acetate kinase 1 (398 aa).

Residue N9 participates in Mg(2+) binding. ATP is bound at residue K16. R89 is a binding site for substrate. Catalysis depends on D146, which acts as the Proton donor/acceptor. ATP contacts are provided by residues 206–210 (HLGNG), 281–283 (DCR), and 329–333 (GIGEN). E384 contributes to the Mg(2+) binding site.

The protein belongs to the acetokinase family. Homodimer. It depends on Mg(2+) as a cofactor. Requires Mn(2+) as cofactor.

It is found in the cytoplasm. The enzyme catalyses acetate + ATP = acetyl phosphate + ADP. It functions in the pathway metabolic intermediate biosynthesis; acetyl-CoA biosynthesis; acetyl-CoA from acetate: step 1/2. Catalyzes the formation of acetyl phosphate from acetate and ATP. Can also catalyze the reverse reaction. The chain is Acetate kinase 1 from Photobacterium profundum (strain SS9).